We begin with the raw amino-acid sequence, 425 residues long: Dihydroorotase (425 aa).

Positions 58 and 60 each coordinate Zn(2+). Residues 60–62 (HFR) and N92 contribute to the substrate site. Zn(2+) contacts are provided by D150, H177, and H230. Residue N276 participates in substrate binding. D303 contributes to the Zn(2+) binding site. D303 is a catalytic residue. Substrate contacts are provided by residues H307 and 321–322 (FG).

The protein belongs to the metallo-dependent hydrolases superfamily. DHOase family. Class I DHOase subfamily. Zn(2+) is required as a cofactor.

The catalysed reaction is (S)-dihydroorotate + H2O = N-carbamoyl-L-aspartate + H(+). Its pathway is pyrimidine metabolism; UMP biosynthesis via de novo pathway; (S)-dihydroorotate from bicarbonate: step 3/3. In terms of biological role, catalyzes the reversible cyclization of carbamoyl aspartate to dihydroorotate. This is Dihydroorotase from Pediococcus pentosaceus (strain ATCC 25745 / CCUG 21536 / LMG 10740 / 183-1w).